The sequence spans 536 residues: MSKRSCQILTLLGLCLVCHEATLVGGHVLVYRKATSQLIEEFNDLPAQFGPNLPSNGLKVYVVPARRPYYGCDSLDRPPHLKYPPSAKFVALVARGECVFERKIRVAQNASYSAVIVYNNEGDDLEQMSAENITGIRIPSVFVGHTTGKALATYFTTEVVLIINDELPFNINTQLILPFSILIGMCFIIMVIYMIYKCIREQRRLRRHRLPKSMLKKLPVLRYTKNNANNKYDTCVICLEDFIEDDKLRVLPCSHPYHTHCIDPWLTENRRVCPICKRKVFTKGEARASRSRQPSLDNVTDTDDDTTPLLQQQQSNGRQVGQVSSASSAGGAAGSSSSVAAAAVAGTTRHGTFRRGHAGRNPFEESQSSDDENALLASTVRPATSSGAHERINPFDRAPNLPAHLAEQLTESRRSVWSRINFASFFRRQPAVISVAAPPYLERVESGTSAMGLPVTGTIAVASPASNNILNPNLSGSFKDEDDMPPHRSIYEPIAISTPAADSATVDDSAFLQTPTQGGIGVAALPHSASDRQFLI.

A signal peptide spans 1–21 (MSKRSCQILTLLGLCLVCHEA). Topologically, residues 22-174 (TLVGGHVLVY…DELPFNINTQ (153 aa)) are extracellular. Positions 89-151 (FVALVARGEC…FVGHTTGKAL (63 aa)) constitute a PA domain. N-linked (GlcNAc...) asparagine glycosylation is found at asparagine 109 and asparagine 132. The chain crosses the membrane as a helical span at residues 175–195 (LILPFSILIGMCFIIMVIYMI). At 196-536 (YKCIREQRRL…HSASDRQFLI (341 aa)) the chain is on the cytoplasmic side. The RING-type; atypical zinc finger occupies 235–277 (CVICLEDFIEDDKLRVLPCSHPYHTHCIDPWLTENRRVCPICK). Disordered regions lie at residues 287 to 334 (RASR…GAAG) and 350 to 372 (HGTF…SDDE). Low complexity predominate over residues 307-334 (TPLLQQQQSNGRQVGQVSSASSAGGAAG).

It belongs to the Godzilla family.

Its subcellular location is the endosome membrane. It carries out the reaction S-ubiquitinyl-[E2 ubiquitin-conjugating enzyme]-L-cysteine + [acceptor protein]-L-lysine = [E2 ubiquitin-conjugating enzyme]-L-cysteine + N(6)-ubiquitinyl-[acceptor protein]-L-lysine.. It functions in the pathway protein modification; protein ubiquitination. In terms of biological role, endosomal E3 ubiquitin-protein ligase that regulates the recycling endosome pathway by mediating ubiquitination of Synaptobrevin (Syb). Also acts as a regulator of transcytosis in wing imaginal disks by catalyzing ubiquitination of Syb: ubiquitination of Syb promotes transcytosis of wingless (wg) to the basolateral surface. The sequence is that of E3 ubiquitin-protein ligase Godzilla from Drosophila melanogaster (Fruit fly).